Consider the following 313-residue polypeptide: Aspartate carbamoyltransferase catalytic subunit (313 aa).

Positions 51 and 52 each coordinate carbamoyl phosphate. Lysine 80 lines the L-aspartate pocket. The carbamoyl phosphate site is built by arginine 101, histidine 129, and glutamine 132. L-aspartate contacts are provided by arginine 162 and arginine 224. Carbamoyl phosphate is bound by residues leucine 263 and proline 264.

This sequence belongs to the aspartate/ornithine carbamoyltransferase superfamily. ATCase family. In terms of assembly, heterododecamer (2C3:3R2) of six catalytic PyrB chains organized as two trimers (C3), and six regulatory PyrI chains organized as three dimers (R2).

It carries out the reaction carbamoyl phosphate + L-aspartate = N-carbamoyl-L-aspartate + phosphate + H(+). It participates in pyrimidine metabolism; UMP biosynthesis via de novo pathway; (S)-dihydroorotate from bicarbonate: step 2/3. Functionally, catalyzes the condensation of carbamoyl phosphate and aspartate to form carbamoyl aspartate and inorganic phosphate, the committed step in the de novo pyrimidine nucleotide biosynthesis pathway. In Bacteroides thetaiotaomicron (strain ATCC 29148 / DSM 2079 / JCM 5827 / CCUG 10774 / NCTC 10582 / VPI-5482 / E50), this protein is Aspartate carbamoyltransferase catalytic subunit.